We begin with the raw amino-acid sequence, 233 residues long: C-type lectin domain family 2 member D2 (233 aa).

Residues 1-34 (MPSSAHLQDAPPLLSRTLTQDEEQTSLRQSSSCG) are disordered. Residues 1 to 76 (MPSSAHLQDA…SPESPAKLPC (76 aa)) are Cytoplasmic-facing. A helical; Signal-anchor for type II membrane protein membrane pass occupies residues 77–97 (CYGVIMVLSVAVVALSVALSV). Topologically, residues 98-233 (KKTPQILTVK…KPNSYTSQCQ (136 aa)) are extracellular. The C-type lectin domain occupies 119-228 (VGNKCYYFNE…KSICSKPNSY (110 aa)). N132 carries N-linked (GlcNAc...) asparagine glycosylation.

It is found in the cell membrane. Its function is as follows. Lectin-type cell surface receptor. The sequence is that of C-type lectin domain family 2 member D2 (Clec2d2) from Rattus norvegicus (Rat).